The following is a 397-amino-acid chain: Succinate--CoA ligase [ADP-forming] subunit beta (397 aa).

Positions 9–254 (KALLKSFGAP…KSEEDEKEIQ (246 aa)) constitute an ATP-grasp domain. ATP-binding positions include Lys46, 53–55 (GRG), Glu109, Ala112, and Glu117. Mg(2+)-binding residues include Asn209 and Asp223. Substrate is bound by residues Asn274 and 331 to 333 (GIM).

It belongs to the succinate/malate CoA ligase beta subunit family. In terms of assembly, heterotetramer of two alpha and two beta subunits. Mg(2+) serves as cofactor.

The catalysed reaction is succinate + ATP + CoA = succinyl-CoA + ADP + phosphate. It carries out the reaction GTP + succinate + CoA = succinyl-CoA + GDP + phosphate. The protein operates within carbohydrate metabolism; tricarboxylic acid cycle; succinate from succinyl-CoA (ligase route): step 1/1. Succinyl-CoA synthetase functions in the citric acid cycle (TCA), coupling the hydrolysis of succinyl-CoA to the synthesis of either ATP or GTP and thus represents the only step of substrate-level phosphorylation in the TCA. The beta subunit provides nucleotide specificity of the enzyme and binds the substrate succinate, while the binding sites for coenzyme A and phosphate are found in the alpha subunit. This chain is Succinate--CoA ligase [ADP-forming] subunit beta, found in Rhizobium rhizogenes (strain K84 / ATCC BAA-868) (Agrobacterium radiobacter).